A 195-amino-acid polypeptide reads, in one-letter code: 2-amino-4-hydroxy-6-hydroxymethyldihydropteridine pyrophosphokinase (195 aa).

This sequence belongs to the HPPK family.

It catalyses the reaction 6-hydroxymethyl-7,8-dihydropterin + ATP = (7,8-dihydropterin-6-yl)methyl diphosphate + AMP + H(+). The protein operates within cofactor biosynthesis; tetrahydrofolate biosynthesis; 2-amino-4-hydroxy-6-hydroxymethyl-7,8-dihydropteridine diphosphate from 7,8-dihydroneopterin triphosphate: step 4/4. Functionally, catalyzes the transfer of pyrophosphate from adenosine triphosphate (ATP) to 6-hydroxymethyl-7,8-dihydropterin, an enzymatic step in folate biosynthesis pathway. The polypeptide is 2-amino-4-hydroxy-6-hydroxymethyldihydropteridine pyrophosphokinase (folK) (Synechocystis sp. (strain ATCC 27184 / PCC 6803 / Kazusa)).